A 473-amino-acid chain; its full sequence is Glycine--tRNA ligase (473 aa).

Substrate is bound by residues Arg-101 and Glu-172. ATP is bound by residues 204 to 206 (RNE), 214 to 219 (FRTREF), 289 to 290 (EL), and 333 to 336 (GVER). Residue 219–223 (FEQME) coordinates substrate. 329–333 (EPSVG) is a binding site for substrate.

The protein belongs to the class-II aminoacyl-tRNA synthetase family. As to quaternary structure, homodimer.

It localises to the cytoplasm. It carries out the reaction tRNA(Gly) + glycine + ATP = glycyl-tRNA(Gly) + AMP + diphosphate. Catalyzes the attachment of glycine to tRNA(Gly). In Ureaplasma parvum serovar 3 (strain ATCC 27815 / 27 / NCTC 11736), this protein is Glycine--tRNA ligase.